Here is a 225-residue protein sequence, read N- to C-terminus: Membrane protein LapB (225 aa).

To H.influenzae HI_1119.

The protein localises to the cell membrane. The chain is Membrane protein LapB (lapB) from Mannheimia haemolytica (Pasteurella haemolytica).